The following is a 235-amino-acid chain: Large ribosomal subunit protein uL1 (235 aa).

The protein belongs to the universal ribosomal protein uL1 family. As to quaternary structure, part of the 50S ribosomal subunit.

Functionally, binds directly to 23S rRNA. The L1 stalk is quite mobile in the ribosome, and is involved in E site tRNA release. Protein L1 is also a translational repressor protein, it controls the translation of the L11 operon by binding to its mRNA. The chain is Large ribosomal subunit protein uL1 from Nitratidesulfovibrio vulgaris (strain DSM 19637 / Miyazaki F) (Desulfovibrio vulgaris).